Reading from the N-terminus, the 271-residue chain is MLSHIVEYECQYTDQLYKKRKIWHDGRLKYFQLNNRFMLYTEKDNVLLASEFKINSKELKAILNPEGFDIEEHRIFSQFLVIISNIIEEYDRDIQVAATHVRAYPSNLSVQKQRPLISDNAPSLNHISTAREVHSNIKVTTPNRKQTEDNATKGGFNISKLTLKVNKPFKKPKRILSTNVVNESNRPSIRSQKIQEVTPQLHETNTSTKVQTAGKVALNNDNIAQGNYATITEEAKVRDGSDRKKDMANLSKSGKRRVGGIRRIVHEPLGI.

This is an uncharacterized protein from Saccharomyces cerevisiae (strain ATCC 204508 / S288c) (Baker's yeast).